Consider the following 61-residue polypeptide: Metallothionein-1 (61 aa).

Residue methionine 1 is modified to N-acetylmethionine. The tract at residues 1–29 (MDPNCSCPTGGSCTCAGSCKCKACRCPSC) is beta. Positions 5, 7, 13, 15, 19, 21, 24, 26, 29, 33, 34, 36, 37, 41, 44, 48, 50, 57, 59, and 60 each coordinate a divalent metal cation. The interval 30–61 (KKSCCSCCPVGCAKCAQGCVCKGASDKCSCCA) is alpha.

Belongs to the metallothionein superfamily. Type 1 family. As to quaternary structure, monomer.

In terms of biological role, metallothioneins have a high content of cysteine residues that bind various heavy metals; these proteins are transcriptionally regulated by both heavy metals and glucocorticoids. This is Metallothionein-1 (MT1) from Bos taurus (Bovine).